We begin with the raw amino-acid sequence, 46 residues long: Esculentin-1 (46 aa).

The cysteines at positions 40 and 46 are disulfide-linked.

In terms of tissue distribution, expressed by the skin glands.

The protein resides in the secreted. Its function is as follows. Antimicrobial peptide. Stimulates insulin release by BRIN-BD11 cells in vitro. The polypeptide is Esculentin-1 (Pelophylax saharicus (Sahara frog)).